The following is a 297-amino-acid chain: Myoblast determination protein 1 homolog (297 aa).

Residues 52 to 76 are disordered; that stretch reads KPEEHPHHHGHHHGHPHEEEHVRAP. The region spanning 101-152 is the bHLH domain; the sequence is DRRKAATMRERRRLSKVNEAFETLKRCTSTNPNQRLPKVEILRNAIRYIESL. Disordered stretches follow at residues 171 to 221 and 243 to 297; these read SGES…GKSS and CPIL…YQVL. Composition is skewed to polar residues over residues 174-184 and 258-297; these read SDASSPRSNCS and CSPQ…YQVL.

In terms of assembly, efficient DNA binding requires dimerization with another bHLH protein. Seems to form active heterodimers with ITF-2.

It localises to the nucleus. Its function is as follows. Acts as a transcriptional activator that promotes transcription of muscle-specific target genes and plays a role in muscle differentiation. Induces fibroblasts to differentiate into myoblasts. Interacts with and is inhibited by the twist protein. This interaction probably involves the basic domains of both proteins. The sequence is that of Myoblast determination protein 1 homolog (MYOD1) from Coturnix japonica (Japanese quail).